Here is a 217-residue protein sequence, read N- to C-terminus: Cytidylate kinase (217 aa).

An ATP-binding site is contributed by 9–17 (GPAASGKSS).

Belongs to the cytidylate kinase family. Type 1 subfamily.

The protein resides in the cytoplasm. The enzyme catalyses CMP + ATP = CDP + ADP. It carries out the reaction dCMP + ATP = dCDP + ADP. The protein is Cytidylate kinase of Bdellovibrio bacteriovorus (strain ATCC 15356 / DSM 50701 / NCIMB 9529 / HD100).